Here is a 561-residue protein sequence, read N- to C-terminus: Sesquiterpene synthase 2 (561 aa).

Asp-313, Asp-317, Asp-458, and Glu-466 together coordinate Mg(2+). The DDXXD motif motif lies at 313 to 317 (DDIYD).

Belongs to the terpene synthase family. Tpsa subfamily. Mn(2+) is required as a cofactor. The cofactor is Mg(2+).

The protein resides in the cytoplasm. The catalysed reaction is (2E,6E)-farnesyl diphosphate + H2O = kunzeaol + diphosphate. The protein operates within secondary metabolite biosynthesis; terpenoid biosynthesis. In terms of biological role, involved in the biosynthesis of kunzeaol. Produces mainly (-)-germacrene D along with gamma-cadinene. The polypeptide is Sesquiterpene synthase 2 (STS2) (Thapsia garganica (Deadly carrot)).